Consider the following 390-residue polypeptide: GTPase Obg (390 aa).

The Obg domain occupies 1–159; the sequence is MKFVDEAAIL…RELMLELLLL (159 aa). One can recognise an OBG-type G domain in the interval 160 to 333; the sequence is ADVGMLGLPN…LCWDVMSFLN (174 aa). Residues 166-173, 191-195, 213-216, 283-286, and 314-316 contribute to the GTP site; these read GLPNAGKS, FTTLI, DIPG, NKID, and SAA. Ser173 and Thr193 together coordinate Mg(2+). Over residues 364 to 384 the composition is skewed to acidic residues; sequence VEAEAEDDWDDDWDEEDDDGV. A disordered region spans residues 364–390; sequence VEAEAEDDWDDDWDEEDDDGVEIIYER.

Belongs to the TRAFAC class OBG-HflX-like GTPase superfamily. OBG GTPase family. Monomer. Requires Mg(2+) as cofactor.

The protein localises to the cytoplasm. An essential GTPase which binds GTP, GDP and possibly (p)ppGpp with moderate affinity, with high nucleotide exchange rates and a fairly low GTP hydrolysis rate. Plays a role in control of the cell cycle, stress response, ribosome biogenesis and in those bacteria that undergo differentiation, in morphogenesis control. In Yersinia pestis, this protein is GTPase Obg.